The sequence spans 626 residues: tRNA 5-methylaminomethyl-2-thiouridine biosynthesis bifunctional protein MnmC (626 aa).

Residues 1–237 are tRNA (mnm(5)s(2)U34)-methyltransferase; sequence MKGPQLDYAD…KRDMTVGVFQ (237 aa). The interval 255-626 is FAD-dependent cmnm(5)s(2)U34 oxidoreductase; sequence IGSGLSGANV…RVLPNRFSQE (372 aa).

This sequence in the N-terminal section; belongs to the methyltransferase superfamily. tRNA (mnm(5)s(2)U34)-methyltransferase family. The protein in the C-terminal section; belongs to the DAO family. Requires FAD as cofactor.

It is found in the cytoplasm. It carries out the reaction 5-aminomethyl-2-thiouridine(34) in tRNA + S-adenosyl-L-methionine = 5-methylaminomethyl-2-thiouridine(34) in tRNA + S-adenosyl-L-homocysteine + H(+). Its function is as follows. Catalyzes the last two steps in the biosynthesis of 5-methylaminomethyl-2-thiouridine (mnm(5)s(2)U) at the wobble position (U34) in tRNA. Catalyzes the FAD-dependent demodification of cmnm(5)s(2)U34 to nm(5)s(2)U34, followed by the transfer of a methyl group from S-adenosyl-L-methionine to nm(5)s(2)U34, to form mnm(5)s(2)U34. This chain is tRNA 5-methylaminomethyl-2-thiouridine biosynthesis bifunctional protein MnmC, found in Hahella chejuensis (strain KCTC 2396).